We begin with the raw amino-acid sequence, 66 residues long: Large ribosomal subunit protein bL35 (66 aa).

Basic residues-rich tracts occupy residues 1–15 (MPKL…KRFK) and 28–45 (TKRH…RTRR). A disordered region spans residues 1-49 (MPKLKTKSSAKKRFKVTASGRVMSAQSTKRHGMTKRSKRSLRTRRGIAQ).

Belongs to the bacterial ribosomal protein bL35 family.

The chain is Large ribosomal subunit protein bL35 from Anaplasma marginale (strain Florida).